A 354-amino-acid chain; its full sequence is S-adenosylmethionine:tRNA ribosyltransferase-isomerase (354 aa).

It belongs to the QueA family. In terms of assembly, monomer.

It localises to the cytoplasm. The catalysed reaction is 7-aminomethyl-7-carbaguanosine(34) in tRNA + S-adenosyl-L-methionine = epoxyqueuosine(34) in tRNA + adenine + L-methionine + 2 H(+). Its pathway is tRNA modification; tRNA-queuosine biosynthesis. Transfers and isomerizes the ribose moiety from AdoMet to the 7-aminomethyl group of 7-deazaguanine (preQ1-tRNA) to give epoxyqueuosine (oQ-tRNA). This is S-adenosylmethionine:tRNA ribosyltransferase-isomerase from Salmonella paratyphi C (strain RKS4594).